Reading from the N-terminus, the 166-residue chain is Ferric nitrobindin-like protein (166 aa).

The short motif at 21–27 is the GXWXGXG element; it reads GHWEGEG.

Belongs to the nitrobindin family.

The polypeptide is Ferric nitrobindin-like protein (Cutibacterium acnes (strain DSM 16379 / KPA171202) (Propionibacterium acnes)).